We begin with the raw amino-acid sequence, 295 residues long: ER-localized J domain-containing protein 5 (295 aa).

A signal peptide spans 1 to 20; the sequence is MNGYWKPALVVLGLVSLSYA. Topologically, residues 21-130 are lumenal; that stretch reads FTTIETEIFQ…GFYFSRMKPK (110 aa). The region spanning 42–110 is the J domain; sequence DMNFYKFLKL…RKIYDYYLQN (69 aa). The chain crosses the membrane as a helical span at residues 131 to 151; that stretch reads TWFLLAFIWIVVNIGQYIISI. Over 152–295 the chain is Cytoplasmic; that stretch reads IQYRSQRSRI…PNGKVIYSRK (144 aa). Residues 259 to 287 form a disordered region; it reads KYDGNQTKKGNKVKKGSAKKGQKKMELPN. Residues 267-280 show a composition bias toward basic residues; the sequence is KGNKVKKGSAKKGQ.

This sequence belongs to the DnaJ family.

It localises to the endoplasmic reticulum membrane. In terms of biological role, dnaJ-like chaperone required for the folding capacity of the endoplasmic reticulum. In Saccharomyces cerevisiae (strain ATCC 204508 / S288c) (Baker's yeast), this protein is ER-localized J domain-containing protein 5 (ERJ5).